The primary structure comprises 1059 residues: Carbamoyl phosphate synthase large chain (1059 aa).

The interval 1-401 (MPKRTDIKKI…SLLKACRSLE (401 aa)) is carboxyphosphate synthetic domain. ATP is bound by residues Arg129, Arg169, Gly175, Gly176, Arg208, Ile210, Glu215, Gly241, Ile242, His243, Gln284, and Glu298. The ATP-grasp 1 domain maps to 133–327 (KQLMEDLEQP…IAKLAAKIAV (195 aa)). The Mg(2+) site is built by Gln284, Glu298, and Asn300. Positions 284, 298, and 300 each coordinate Mn(2+). The interval 402–546 (IGVYHNEMPE…YSTYEWENES (145 aa)) is oligomerization domain. A carbamoyl phosphate synthetic domain region spans residues 547–929 (IKSEKESVIV…ALYKAFEASY (383 aa)). Residues 671–861 (EQALKDLNIP…MAQIATKLIL (191 aa)) form the ATP-grasp 2 domain. Residues Arg707, Ser746, Leu748, Glu752, Gly777, Val778, His779, Ser780, Gln820, and Glu832 each coordinate ATP. The Mg(2+) site is built by Gln820, Glu832, and Asn834. The Mn(2+) site is built by Gln820, Glu832, and Asn834. The region spanning 930–1059 (FHLPAFGNVI…ESRGFITQAI (130 aa)) is the MGS-like domain. Residues 930 to 1059 (FHLPAFGNVI…ESRGFITQAI (130 aa)) form an allosteric domain region.

This sequence belongs to the CarB family. As to quaternary structure, composed of two chains; the small (or glutamine) chain promotes the hydrolysis of glutamine to ammonia, which is used by the large (or ammonia) chain to synthesize carbamoyl phosphate. Tetramer of heterodimers (alpha,beta)4. Requires Mg(2+) as cofactor. It depends on Mn(2+) as a cofactor.

It catalyses the reaction hydrogencarbonate + L-glutamine + 2 ATP + H2O = carbamoyl phosphate + L-glutamate + 2 ADP + phosphate + 2 H(+). The enzyme catalyses hydrogencarbonate + NH4(+) + 2 ATP = carbamoyl phosphate + 2 ADP + phosphate + 2 H(+). It functions in the pathway amino-acid biosynthesis; L-arginine biosynthesis; carbamoyl phosphate from bicarbonate: step 1/1. It participates in pyrimidine metabolism; UMP biosynthesis via de novo pathway; (S)-dihydroorotate from bicarbonate: step 1/3. Its function is as follows. Large subunit of the glutamine-dependent carbamoyl phosphate synthetase (CPSase). CPSase catalyzes the formation of carbamoyl phosphate from the ammonia moiety of glutamine, carbonate, and phosphate donated by ATP, constituting the first step of 2 biosynthetic pathways, one leading to arginine and/or urea and the other to pyrimidine nucleotides. The large subunit (synthetase) binds the substrates ammonia (free or transferred from glutamine from the small subunit), hydrogencarbonate and ATP and carries out an ATP-coupled ligase reaction, activating hydrogencarbonate by forming carboxy phosphate which reacts with ammonia to form carbamoyl phosphate. The protein is Carbamoyl phosphate synthase large chain of Streptococcus mutans serotype c (strain ATCC 700610 / UA159).